A 1379-amino-acid polypeptide reads, in one-letter code: DNA-directed RNA polymerase subunit beta'' (1379 aa).

Cys-220, Cys-293, Cys-300, and Cys-303 together coordinate Zn(2+).

This sequence belongs to the RNA polymerase beta' chain family. RpoC2 subfamily. In terms of assembly, in plastids the minimal PEP RNA polymerase catalytic core is composed of four subunits: alpha, beta, beta', and beta''. When a (nuclear-encoded) sigma factor is associated with the core the holoenzyme is formed, which can initiate transcription. The cofactor is Zn(2+).

Its subcellular location is the plastid. The protein localises to the chloroplast. It carries out the reaction RNA(n) + a ribonucleoside 5'-triphosphate = RNA(n+1) + diphosphate. DNA-dependent RNA polymerase catalyzes the transcription of DNA into RNA using the four ribonucleoside triphosphates as substrates. The chain is DNA-directed RNA polymerase subunit beta'' from Barbarea verna (Land cress).